The chain runs to 615 residues: Leucine aminopeptidase 2 (615 aa).

A peptide contacts are provided by residues 139 to 141 and 271 to 276; these read QCQ and PYGGME. Residue His300 coordinates Zn(2+). The active-site Proton acceptor is Glu301. 2 residues coordinate Zn(2+): His304 and Glu323. The active-site Proton donor is Tyr386.

This sequence belongs to the peptidase M1 family. Zn(2+) serves as cofactor.

It is found in the cytoplasm. The protein resides in the nucleus. The enzyme catalyses an epoxide + H2O = an ethanediol. In terms of biological role, aminopeptidase that preferentially cleaves di- and tripeptides. Also has low epoxide hydrolase activity (in vitro). Can hydrolyze the epoxide leukotriene LTA(4) but it forms preferentially 5,6-dihydroxy-7,9,11,14-eicosatetraenoic acid rather than the cytokine leukotriene B(4) as the product compared to the homologous mammalian enzyme (in vitro). This chain is Leucine aminopeptidase 2, found in Aspergillus oryzae (strain ATCC 42149 / RIB 40) (Yellow koji mold).